The chain runs to 259 residues: Phosphatidylglycerol--prolipoprotein diacylglyceryl transferase (259 aa).

A run of 4 helical transmembrane segments spans residues 9-29 (IIFY…VVGI), 55-75 (FITY…VLLY), 92-112 (EGGM…YLFC), and 117-137 (VNFL…LFLG). Residue Arg138 participates in a 1,2-diacyl-sn-glycero-3-phospho-(1'-sn-glycerol) binding. Helical transmembrane passes span 172-192 (QLYE…YATF), 201-221 (GLNS…IEIF), and 228-248 (IGFI…MLIL).

Belongs to the Lgt family.

It localises to the cell inner membrane. The enzyme catalyses L-cysteinyl-[prolipoprotein] + a 1,2-diacyl-sn-glycero-3-phospho-(1'-sn-glycerol) = an S-1,2-diacyl-sn-glyceryl-L-cysteinyl-[prolipoprotein] + sn-glycerol 1-phosphate + H(+). It participates in protein modification; lipoprotein biosynthesis (diacylglyceryl transfer). Functionally, catalyzes the transfer of the diacylglyceryl group from phosphatidylglycerol to the sulfhydryl group of the N-terminal cysteine of a prolipoprotein, the first step in the formation of mature lipoproteins. This is Phosphatidylglycerol--prolipoprotein diacylglyceryl transferase from Rickettsia akari (strain Hartford).